Consider the following 145-residue polypeptide: Nucleoside diphosphate kinase (145 aa).

ATP is bound by residues K11, F59, R87, T93, R104, and N114. The active-site Pros-phosphohistidine intermediate is the H117.

The protein belongs to the NDK family. It depends on Mg(2+) as a cofactor.

It is found in the cytoplasm. The catalysed reaction is a 2'-deoxyribonucleoside 5'-diphosphate + ATP = a 2'-deoxyribonucleoside 5'-triphosphate + ADP. It carries out the reaction a ribonucleoside 5'-diphosphate + ATP = a ribonucleoside 5'-triphosphate + ADP. In terms of biological role, major role in the synthesis of nucleoside triphosphates other than ATP. The ATP gamma phosphate is transferred to the NDP beta phosphate via a ping-pong mechanism, using a phosphorylated active-site intermediate. The sequence is that of Nucleoside diphosphate kinase from Sulfolobus acidocaldarius (strain ATCC 33909 / DSM 639 / JCM 8929 / NBRC 15157 / NCIMB 11770).